The chain runs to 223 residues: Deoxyribose-phosphate aldolase 1 (223 aa).

Catalysis depends on Asp-91, which acts as the Proton donor/acceptor. Lys-154 functions as the Schiff-base intermediate with acetaldehyde in the catalytic mechanism. Catalysis depends on Lys-183, which acts as the Proton donor/acceptor.

Belongs to the DeoC/FbaB aldolase family. DeoC type 1 subfamily.

It is found in the cytoplasm. It catalyses the reaction 2-deoxy-D-ribose 5-phosphate = D-glyceraldehyde 3-phosphate + acetaldehyde. It functions in the pathway carbohydrate degradation; 2-deoxy-D-ribose 1-phosphate degradation; D-glyceraldehyde 3-phosphate and acetaldehyde from 2-deoxy-alpha-D-ribose 1-phosphate: step 2/2. In terms of biological role, catalyzes a reversible aldol reaction between acetaldehyde and D-glyceraldehyde 3-phosphate to generate 2-deoxy-D-ribose 5-phosphate. The polypeptide is Deoxyribose-phosphate aldolase 1 (Bacillus licheniformis (strain ATCC 14580 / DSM 13 / JCM 2505 / CCUG 7422 / NBRC 12200 / NCIMB 9375 / NCTC 10341 / NRRL NRS-1264 / Gibson 46)).